A 268-amino-acid polypeptide reads, in one-letter code: MVLEATVLVIDNSEYSRNGDFPRTRFEAQIDSVEFIFQAKRNSNPENTVGLISGAGANPRVLSTFTAEFGKILAGLHDTQIEGKLHMATALQIAQLTLKHRQNKVQHQRIVAFVCSPISDSRDELIRLAKTLKKNNVAVDIINFGEIEQNTELLDEFIAAVNNPQEETSHLLTVTPGPRLLYENIASSPIILEEGSSGMGAFGGSGGDSDANGTFMDFGVDPSMDPELAMALRLSMEEEQQRQERLRQQQQQQDQPEQSEQPEQHQDK.

In terms of domain architecture, VWFA spans 5–190 (ATVLVIDNSE…LYENIASSPI (186 aa)). Residues 223 to 242 (SMDPELAMALRLSMEEEQQR) form the UIM domain. The disordered stretch occupies residues 226 to 268 (PELAMALRLSMEEEQQRQERLRQQQQQQDQPEQSEQPEQHQDK). The span at 235 to 247 (SMEEEQQRQERLR) shows a compositional bias: basic and acidic residues. Over residues 248 to 261 (QQQQQQDQPEQSEQ) the composition is skewed to low complexity.

This sequence belongs to the proteasome subunit S5A family. As to quaternary structure, the 26S proteasome is composed of a core protease, known as the 20S proteasome, capped at one or both ends by the 19S regulatory complex (RC). The RC is composed of at least 18 different subunits in two subcomplexes, the base and the lid, which form the portions proximal and distal to the 20S proteolytic core, respectively. In terms of processing, ubiquitinated, leading to its degradation. Ubiquitination is promoted by HUL5.

Its function is as follows. Multiubiquitin binding protein. This is 26S proteasome regulatory subunit RPN10 (RPN10) from Saccharomyces cerevisiae (strain ATCC 204508 / S288c) (Baker's yeast).